The primary structure comprises 473 residues: Argininosuccinate lyase (473 aa).

Belongs to the lyase 1 family. Argininosuccinate lyase subfamily.

Its subcellular location is the cytoplasm. The catalysed reaction is 2-(N(omega)-L-arginino)succinate = fumarate + L-arginine. It functions in the pathway amino-acid biosynthesis; L-arginine biosynthesis; L-arginine from L-ornithine and carbamoyl phosphate: step 3/3. The polypeptide is Argininosuccinate lyase (Chelativorans sp. (strain BNC1)).